The sequence spans 194 residues: Potassium-transporting ATPase KdpC subunit (194 aa).

The helical transmembrane segment at 12-34 (LFLLLLTGGVYPLLTTALGQWWF) threads the bilayer.

This sequence belongs to the KdpC family. In terms of assembly, the system is composed of three essential subunits: KdpA, KdpB and KdpC.

The protein resides in the cell inner membrane. In terms of biological role, part of the high-affinity ATP-driven potassium transport (or Kdp) system, which catalyzes the hydrolysis of ATP coupled with the electrogenic transport of potassium into the cytoplasm. This subunit acts as a catalytic chaperone that increases the ATP-binding affinity of the ATP-hydrolyzing subunit KdpB by the formation of a transient KdpB/KdpC/ATP ternary complex. The protein is Potassium-transporting ATPase KdpC subunit of Salmonella heidelberg (strain SL476).